The following is a 558-amino-acid chain: MTTMTTKFRDVEIRAPRGTELTAKSWLTEAPLRMLMNNLDPDVAENPKELVVYGGIGRAARNWECFDKIVDTLKNLETDETLLVQSGKPVGVFKTHKDAPRVLIANSNLVPHWANWEHFNELDAKALAMYGQMTAGSWIYIGSQGIVQGTYETFVEAGRQHYNGDLKGRWVLTAGLGGMGGAQPLAATLAGACSLNIECQQASIDFRLRTRYVDEQATDLDDALARIDRYTKEGKAISIALHGNAAEILPELVRRGVRPDMVTDQTSAHDPLNGYLPVGWTWDEYRERAKKEPEAVVKAAKQSMAKHVQAMLDFQKMGVPTFDYGNNIRQMAKEEGVANAFDFPGFVPAYIRPLFCRGIGPFRWAALSGDPEDIYKTDAKVKELIPDDEHLHHWLDMARERISFQGLPARICWVGLGLRAKLGLAFNEMVRSGELSAPIVIGRDHLDSGSVASPNRETEAMQDGSDAVSDWPLLNALLNTAGGATWVSLHHGGGVGMGFSQHSGVVIVCDGTDEAAARIARVLTNDPATGVMRHADAGYEIAINCAKEQGLHLPMITQ.

NAD(+) is bound by residues 54-55, Gln132, 178-180, Glu198, 244-245, 265-269, 275-276, and Tyr324; these read GG, GMG, NA, QTSAH, and YL. Cys412 is a catalytic residue. NAD(+) is bound at residue Gly494.

It belongs to the urocanase family. The cofactor is NAD(+).

It is found in the cytoplasm. The enzyme catalyses 4-imidazolone-5-propanoate = trans-urocanate + H2O. Its pathway is amino-acid degradation; L-histidine degradation into L-glutamate; N-formimidoyl-L-glutamate from L-histidine: step 2/3. Functionally, catalyzes the conversion of urocanate to 4-imidazolone-5-propionate. The sequence is that of Urocanate hydratase from Acinetobacter baumannii (strain AB307-0294).